The following is a 1091-amino-acid chain: Voltage-dependent calcium channel subunit alpha-2/delta-3 (1091 aa).

The signal sequence occupies residues 1 to 33; it reads MAGPGSLCCASRGASALLATALLYAALGDVVRS. The Extracellular portion of the chain corresponds to 34–1068; that stretch reads EQQIPLSVVK…HPEENARECG (1035 aa). Asparagine 166 carries N-linked (GlcNAc...) asparagine glycosylation. A VWFA domain is found at 256-438; the sequence is DVVILVDVSG…ENVMEYLHVL (183 aa). A divalent metal cation-binding residues include aspartate 262, serine 264, and serine 266. Positions 262 to 266 match the MIDAS-like motif motif; sequence DVSGS. N-linked (GlcNAc...) asparagine glycosylation is present at asparagine 309. Cysteine 412 and cysteine 1055 are oxidised to a cystine. The Cache domain occupies 452 to 549; that stretch reads WTEAYIDSTL…RPLYEEGKKR (98 aa). 2 N-linked (GlcNAc...) asparagine glycosylation sites follow: asparagine 553 and asparagine 632. Tyrosine 924 carries the phosphotyrosine modification. A helical membrane pass occupies residues 1069–1089; the sequence is GASSLQAQAALLLLPLVSSLF. Over 1090–1091 the chain is Cytoplasmic; that stretch reads SR.

It belongs to the calcium channel subunit alpha-2/delta family. In terms of assembly, dimer formed of alpha-2-2 and delta-2 chains; disulfide-linked. Voltage-dependent calcium channels are multisubunit complexes, consisting of alpha-1 (CACNA1), alpha-2 (CACNA2D), beta (CACNB) and delta (CACNA2D) subunits in a 1:1:1:1 ratio. Post-translationally, N-glycosylated. In terms of processing, may be proteolytically processed into subunits alpha-2-3 and delta-3 that are disulfide-linked. It is however unclear whether such cleavage really takes place in vivo and has a functional role. As to expression, brain-specific. Predominantly expressed in the caudate putamen, entorhinal complex, hippocampus and cortex.

It is found in the membrane. In terms of biological role, the alpha-2/delta subunit of voltage-dependent calcium channels regulates calcium current density and activation/inactivation kinetics of the calcium channel. Acts as a regulatory subunit for P/Q-type calcium channel (CACNA1A), N-type (CACNA1B), L-type (CACNA1C OR CACNA1D) but not T-type (CACNA1G). The polypeptide is Voltage-dependent calcium channel subunit alpha-2/delta-3 (Cacna2d3) (Mus musculus (Mouse)).